A 966-amino-acid chain; its full sequence is Replication protein 1a (966 aa).

The methyltransferase stretch occupies residues 49–381 (RNKLSVAECD…VIINGQSIMS (333 aa)). Residues 71 to 261 (NLTHEYTAPH…HDWKNLGSFL (191 aa)) form the Alphavirus-like MT domain. One can recognise a (+)RNA virus helicase ATP-binding domain in the interval 660-815 (DKTCSCANAK…NIEYDKRDIV (156 aa)). Residues 687 to 951 (MVDGVAGCGK…TRHKRTFEYL (265 aa)) form an ATP-dependent helicase region. Position 690–697 (690–697 (GVAGCGKT)) interacts with ATP. A (+)RNA virus helicase C-terminal domain is found at 816 to 966 (SKTFRCPQDV…GGDLISFYVT (151 aa)).

Belongs to the bromoviridae replication protein 1a family.

The protein localises to the host endoplasmic reticulum membrane. Functionally, involved in the virus replication. Contains a helicase domain and a methyltransferase domain. The methyltransferase domain is probably involved in viral RNA capping. This Vicia faba (Broad bean) protein is Replication protein 1a.